The sequence spans 562 residues: Putative transport protein NT01EI_2530 (562 aa).

6 consecutive transmembrane segments (helical) span residues Leu-8–Gly-28, Leu-32–Gln-52, Phe-66–Phe-86, Met-94–Phe-114, Ile-118–Ala-138, and His-158–Ala-178. RCK C-terminal domains lie at Leu-202–Asn-288 and Lys-290–Phe-373. 5 helical membrane-spanning segments follow: residues Leu-383–Phe-403, Phe-406–Leu-426, Met-443–Gly-463, Ile-477–Val-497, and Ile-541–Val-561.

This sequence belongs to the AAE transporter (TC 2.A.81) family. YbjL subfamily.

Its subcellular location is the cell membrane. The protein is Putative transport protein NT01EI_2530 of Edwardsiella ictaluri (strain 93-146).